The primary structure comprises 246 residues: Transcriptional regulatory protein LytR (246 aa).

The region spanning 2–116 is the Response regulatory domain; sequence KALIIDDEPL…RIEQAVNKVR (115 aa). 4-aspartylphosphate is present on D53. The HTH LytTR-type domain maps to 141–245; the sequence is LPVEIDDKIH…MKDFKASIGL (105 aa).

Homodimer; when phosphorylated. In terms of processing, phosphorylated and dephosphorylated by LytS.

It localises to the cytoplasm. Member of the two-component regulatory system LytR/LytS that regulates genes involved in autolysis, programmed cell death, biofilm formation and cell wall metabolism. Also participates in sensing and responding to host defense cationic antimicrobial peptides (HDPs). Upon phosphorylation by LytS, functions as a transcription regulator by direct binding to promoter regions of target genes including lrgA and lrgB, to positively regulate their expression. The protein is Transcriptional regulatory protein LytR (lytR) of Staphylococcus aureus (strain USA300).